The primary structure comprises 256 residues: Putative F-box protein At3g51171 (256 aa).

The 44-residue stretch at 1 to 44 (MVPLPWELEEDILSRLAAQSLVRFRSVCKRWNYLFDEKSFIKNH) folds into the F-box domain.

This Arabidopsis thaliana (Mouse-ear cress) protein is Putative F-box protein At3g51171.